The primary structure comprises 142 residues: Small ribosomal subunit protein uS9 (142 aa).

The interval 117-142 (KGDPRRTEHKKPGIKHARSKRQKAYR) is disordered. The segment covering 123–142 (TEHKKPGIKHARSKRQKAYR) has biased composition (basic residues).

It belongs to the universal ribosomal protein uS9 family.

The chain is Small ribosomal subunit protein uS9 from Pyrobaculum aerophilum (strain ATCC 51768 / DSM 7523 / JCM 9630 / CIP 104966 / NBRC 100827 / IM2).